The sequence spans 306 residues: Putative syntaxin-3 (306 aa).

Over 1–279 the chain is Cytoplasmic; it reads MPRDRLKELQ…QKRARKMKVC (279 aa). The required for the regulation of the defecation motor program stretch occupies residues 40–180; the sequence is QDADFEMFLE…QLSDEEIENA (141 aa). Residues 204–266 form the t-SNARE coiled-coil homology domain; sequence YDEVKSRADE…KQARGNVEEA (63 aa). The helical; Anchor for type IV membrane protein transmembrane segment at 280 to 300 threads the bilayer; the sequence is IIIGSIIAVLILILFIQSAVC. The Extracellular portion of the chain corresponds to 301–306; that stretch reads HFTPIC.

It belongs to the syntaxin family. In terms of tissue distribution, expressed in body wall, pharyngeal, vulval and enteric muscles and in some head neurons.

The protein localises to the cell membrane. Potentially involved in docking of synaptic vesicles at presynaptic active zones. Acts in the intestine to regulate anterior body muscle contractions (aBOC) and the expulsion steps during the defecation motor program (DMP). This chain is Putative syntaxin-3, found in Caenorhabditis elegans.